The primary structure comprises 203 residues: Guanylate kinase (203 aa).

A Guanylate kinase-like domain is found at 5-183; sequence GVLYILSAPS…AVEELKSVII (179 aa). 12 to 19 contributes to the ATP binding site; sequence APSGAGKT.

Belongs to the guanylate kinase family.

It is found in the cytoplasm. It catalyses the reaction GMP + ATP = GDP + ADP. In terms of biological role, essential for recycling GMP and indirectly, cGMP. This chain is Guanylate kinase, found in Geobacter sulfurreducens (strain ATCC 51573 / DSM 12127 / PCA).